A 333-amino-acid polypeptide reads, in one-letter code: Putative transporter MamV (333 aa).

Transmembrane regions (helical) follow at residues 19-39 (AWLD…LGVL), 86-106 (FLSA…MLWY), 111-131 (LGSG…LISA), 170-190 (VLAG…LAAI), and 191-211 (LVSL…IHGL).

It belongs to the cation diffusion facilitator (CDF) transporter (TC 2.A.4) family.

The protein localises to the cell inner membrane. In terms of biological role, expression of just the minimal mamAB gene cluster (amb0961 to amb0978), including this gene, is sufficient to form a minimal magnetosome chain with small magnetite particles. The polypeptide is Putative transporter MamV (Paramagnetospirillum magneticum (strain ATCC 700264 / AMB-1) (Magnetospirillum magneticum)).